Here is a 552-residue protein sequence, read N- to C-terminus: Cleavage and polyadenylation specificity factor subunit 6 (552 aa).

The segment at 1-213 is necessary for interaction with NXF1; sequence MADGVDHIDI…RGRFPGAVPG (213 aa). The 81-residue stretch at 81 to 161 folds into the RRM domain; the sequence is IALYIGNLTR…QNPVVTPCNK (81 aa). The tract at residues 81–161 is necessary for interaction with NUDT21/CPSF5; it reads IALYIGNLTR…QNPVVTPCNK (81 aa). Positions 81–161 are necessary for nuclear paraspeckles localization; it reads IALYIGNLTR…QNPVVTPCNK (81 aa). A Phosphothreonine modification is found at T157. A compositionally biased stretch (polar residues) spans 169–180; sequence MQSRKTTQSGQM. Disordered regions lie at residues 169-411 and 479-552; these read MQSR…PLSE and GIES…YRHR. The GAR signature appears at 202-206; the sequence is RGRGR. Residues 207–219 are compositionally biased toward low complexity; sequence FPGAVPGGDRFPG. Composition is skewed to pro residues over residues 220-265, 285-366, and 377-388; these read PTGP…PLAG, GQPP…PPPT, and GPPPTDPYGRPP. Residues 389–404 show a composition bias toward basic and acidic residues; sequence PYDRGDYGPPGREMDT. T404 and T407 each carry phosphothreonine. The sufficient for nuclear speckle localization stretch occupies residues 404–552; the sequence is TARTPLSEAE…RDREREYRHR (149 aa). The segment at 405–552 is necessary for RNA-binding; it reads ARTPLSEAEF…RDREREYRHR (148 aa). The segment at 481 to 552 is necessary for interaction with SRSF3, SRSF7 and TRA2B/SFRS10; that stretch reads ESKSYGSGSR…RDREREYRHR (72 aa). The tract at residues 491–552 is arg/Ser-rich domain; sequence RRERSRERDH…RDREREYRHR (62 aa). Basic and acidic residues predominate over residues 494–504; it reads RSRERDHSRSR. A phosphoserine mark is found at S495, S501, S512, S514, and S526. Positions 505–515 are enriched in basic residues; sequence EKSRRHKSRSR. A sufficient for nuclear targeting region spans residues 511–552; the sequence is KSRSRDRHDDYYRERSRERERHRDRDRDRDRERDREREYRHR. Residues 516–552 are compositionally biased toward basic and acidic residues; sequence DRHDDYYRERSRERERHRDRDRDRDRERDREREYRHR.

The protein belongs to the RRM CPSF6/7 family. Component of the cleavage factor Im (CFIm) complex which is a heterotetramer composed of two subunits of NUDT21/CPSF5 and two subunits of CPSF6 or CPSF7 or a heterodimer of CPSF6 and CPSF7. The cleavage factor Im (CFIm) complex associates with the CPSF and CSTF complexes to promote the assembly of the core mRNA 3'-processing machinery. Associates with the exon junction complex (EJC). Associates with the 80S ribosome particle. Interacts (via the RRM domain) with NUDT21/CPSF5; this interaction is direct and enhances binding to RNA. Interacts (via Arg/Ser-rich domain) with FIP1L1 (preferentially via unphosphorylated form and Arg/Glu/Asp-rich domain); this interaction mediates, at least in part, the interaction between the CFIm and CPSF complexes and may be inhibited by CPSF6 hyper-phosphorylation. Interacts (via N-terminus) with NXF1; this interaction is direct. Interacts with SRSF3. Interacts with SRSF7. Interacts with SNRNP70. Interacts with TRA2B/SFRS10. Interacts with UPF1. Interacts with UPF3B. Interacts with VIRMA. Interacts (via Arg/Ser-rich domain) with TNPO3; promoting nuclear import of CPSF6 independently of its phosphorylation status. Interacts with YTHDC1. Post-translationally, phosphorylated. Phosphorylated in the Arg/Ser-rich domain by SRPK1, in vitro. Symmetrically dimethylated on arginine residues in the GAR motif by PRMT5 in a WDR77- and CLNS1A-dependent manner. Asymmetrically dimethylated on arginine residues in the GAR motif by PRMT1.

Its subcellular location is the nucleus. It is found in the nucleoplasm. It localises to the nucleus speckle. The protein localises to the cytoplasm. Component of the cleavage factor Im (CFIm) complex that functions as an activator of the pre-mRNA 3'-end cleavage and polyadenylation processing required for the maturation of pre-mRNA into functional mRNAs. CFIm contributes to the recruitment of multiprotein complexes on specific sequences on the pre-mRNA 3'-end, so called cleavage and polyadenylation signals (pA signals). Most pre-mRNAs contain multiple pA signals, resulting in alternative cleavage and polyadenylation (APA) producing mRNAs with variable 3'-end formation. The CFIm complex acts as a key regulator of cleavage and polyadenylation site choice during APA through its binding to 5'-UGUA-3' elements localized in the 3'-untranslated region (UTR) for a huge number of pre-mRNAs. CPSF6 enhances NUDT21/CPSF5 binding to 5'-UGUA-3' elements localized upstream of pA signals and promotes RNA looping, and hence activates directly the mRNA 3'-processing machinery. Plays a role in mRNA export. The sequence is that of Cleavage and polyadenylation specificity factor subunit 6 from Pongo abelii (Sumatran orangutan).